A 151-amino-acid chain; its full sequence is UPF0178 protein ESA_02916 (151 aa).

This sequence belongs to the UPF0178 family.

This chain is UPF0178 protein ESA_02916, found in Cronobacter sakazakii (strain ATCC BAA-894) (Enterobacter sakazakii).